Reading from the N-terminus, the 211-residue chain is MTIGVVGRKCGMTRIFTEEGVSIPVTVIEIEPNRVTQFKTEETDGYRAVQVTVGERRASRVTAAQAGHFAKANVAAGRTVMEFRLEDGDYQAGDLINAEIFAAGQLVDVTGQSKGKGFQGTIKRWNFRGQDNTHGNSVSHRVPGSIGQCQTPGRVFKGKKMSGHMGAERVTVQSLEVVRVDAERNLLLVKGAVPGATGGNLVVRPAAKARG.

An N5-methylglutamine modification is found at Gln150.

Belongs to the universal ribosomal protein uL3 family. As to quaternary structure, part of the 50S ribosomal subunit. Forms a cluster with proteins L14 and L19. In terms of processing, methylated by PrmB.

Functionally, one of the primary rRNA binding proteins, it binds directly near the 3'-end of the 23S rRNA, where it nucleates assembly of the 50S subunit. The protein is Large ribosomal subunit protein uL3 of Pseudomonas fluorescens (strain SBW25).